The chain runs to 251 residues: Putative F-box protein PP2-B12 (251 aa).

In terms of domain architecture, F-box spans 1 to 46 (MNFLDLPEECIATMISFTSPFDACRISAVSKLLRSAADSNTTWERF).

The sequence is that of Putative F-box protein PP2-B12 (PP2B12) from Arabidopsis thaliana (Mouse-ear cress).